The following is a 377-amino-acid chain: Homoserine O-succinyltransferase (377 aa).

Residues 50–358 (NAILVCHALS…PSTYGHDSFL (309 aa)) enclose the AB hydrolase-1 domain. Ser156 functions as the Nucleophile in the catalytic mechanism. Arg226 is a binding site for substrate. Active-site residues include Asp321 and His354. Position 355 (Asp355) interacts with substrate.

The protein belongs to the AB hydrolase superfamily. MetX family. Homodimer.

It is found in the cytoplasm. The catalysed reaction is L-homoserine + succinyl-CoA = O-succinyl-L-homoserine + CoA. It functions in the pathway amino-acid biosynthesis; L-methionine biosynthesis via de novo pathway; O-succinyl-L-homoserine from L-homoserine: step 1/1. In terms of biological role, transfers a succinyl group from succinyl-CoA to L-homoserine, forming succinyl-L-homoserine. This chain is Homoserine O-succinyltransferase, found in Nitrosomonas eutropha (strain DSM 101675 / C91 / Nm57).